The following is a 443-amino-acid chain: MGQQQSGFGGRGNDRGAGDGEKKEKKKYEAPIPSRIGKKKKGSKGPDAASKLPAVTPHARCRLKLLKSERIKDYLLMEQEFIQNQERLKPQEERQEEERAKVDELRGTPMAVGSLEEIIDDQHAIVSTNVGSEHYVNIMSFVDKEQLEPGCSVLLNHKNHAVIGVLSDDTDPMVSVMKLEKAPQETYADVGGLDQQIQEIKEAVELPLTHPEYYEEMGIRPPKGVILYGCPGTGKTLLAKAVANQTSATFLRIVGSELIQKYLGDGPKMVRELFRVAEENAPSIVFIDEIDAVGTKRYDSNSGGEREIQRTMLELLNQLDGFDSRGDVKVLMATNRIESLDPALIRPGRIDRKIEFPLPDEKTKRRIFQIHTSRMTLGKEVNLEEFITAKDELSGADIKAMCTEAGLLALRERRMRVTMEDFQKSKENVLYRKKEGAPEELYL.

The tract at residues 1–53 (MGQQQSGFGGRGNDRGAGDGEKKEKKKYEAPIPSRIGKKKKGSKGPDAASKLP) is disordered. A compositionally biased stretch (basic and acidic residues) spans 12-29 (GNDRGAGDGEKKEKKKYE). An ATP-binding site is contributed by 229-236 (GCPGTGKT).

This sequence belongs to the AAA ATPase family.

Its subcellular location is the cytoplasm. The protein resides in the nucleus. Its function is as follows. The 26S proteasome is involved in the ATP-dependent degradation of ubiquitinated proteins. The regulatory (or ATPase) complex confers ATP dependency and substrate specificity to the 26S complex. May play a role in the degradation of microtubule severing protein mei-1. The sequence is that of Probable 26S proteasome regulatory subunit 4 (rpt-2) from Caenorhabditis elegans.